We begin with the raw amino-acid sequence, 244 residues long: DNA repair protein RecO (244 aa).

The protein belongs to the RecO family.

In terms of biological role, involved in DNA repair and RecF pathway recombination. The chain is DNA repair protein RecO from Myxococcus xanthus (strain DK1622).